The chain runs to 389 residues: 1-deoxy-D-xylulose 5-phosphate reductoisomerase (389 aa).

Residues S11, G12, S13, V14, N39, and N122 each coordinate NADPH. K123 serves as a coordination point for 1-deoxy-D-xylulose 5-phosphate. E124 contributes to the NADPH binding site. D148 contacts Mn(2+). 1-deoxy-D-xylulose 5-phosphate-binding residues include S149, E150, S174, and H197. Residue E150 participates in Mn(2+) binding. G203 provides a ligand contact to NADPH. 1-deoxy-D-xylulose 5-phosphate contacts are provided by S210, N215, K216, and E219. Position 219 (E219) interacts with Mn(2+).

It belongs to the DXR family. The cofactor is Mg(2+). Mn(2+) serves as cofactor.

The catalysed reaction is 2-C-methyl-D-erythritol 4-phosphate + NADP(+) = 1-deoxy-D-xylulose 5-phosphate + NADPH + H(+). It participates in isoprenoid biosynthesis; isopentenyl diphosphate biosynthesis via DXP pathway; isopentenyl diphosphate from 1-deoxy-D-xylulose 5-phosphate: step 1/6. Its function is as follows. Catalyzes the NADPH-dependent rearrangement and reduction of 1-deoxy-D-xylulose-5-phosphate (DXP) to 2-C-methyl-D-erythritol 4-phosphate (MEP). This chain is 1-deoxy-D-xylulose 5-phosphate reductoisomerase, found in Leptospira interrogans serogroup Icterohaemorrhagiae serovar Lai (strain 56601).